Reading from the N-terminus, the 677-residue chain is Methionine--tRNA ligase (677 aa).

The 'HIGH' region signature appears at 15 to 25; that stretch reads PYANGSIHLGH. Cysteine 146, cysteine 149, cysteine 159, and cysteine 162 together coordinate Zn(2+). The 'KMSKS' region signature appears at 333–337; sequence KMSKS. Residue lysine 336 coordinates ATP. In terms of domain architecture, tRNA-binding spans 575–677; that stretch reads DFAKIDLRVA…DGAKPGQQVK (103 aa).

Belongs to the class-I aminoacyl-tRNA synthetase family. MetG type 1 subfamily. Homodimer. Zn(2+) serves as cofactor.

It localises to the cytoplasm. The catalysed reaction is tRNA(Met) + L-methionine + ATP = L-methionyl-tRNA(Met) + AMP + diphosphate. In terms of biological role, is required not only for elongation of protein synthesis but also for the initiation of all mRNA translation through initiator tRNA(fMet) aminoacylation. This Salmonella paratyphi C (strain RKS4594) protein is Methionine--tRNA ligase.